Consider the following 790-residue polypeptide: Cadherin-6 (790 aa).

A signal peptide spans 1–30 (MRTYHCFWLLFWAGQPHQSFLTLLSKRTSG). The propeptide occupies 31–53 (FPEKEKVLVLSGNSRRDLSRSKR). Cadherin domains follow at residues 54-159 (SWMW…EPMF), 160-268 (TKDV…PPRF), 269-383 (PQST…PPVF), 384-486 (SRPA…DNAP), and 487-608 (EFAM…LIHP). At 54–615 (SWMWNQFFLL…IHPTGLSTGA (562 aa)) the chain is on the extracellular side. Residues N165 and N255 are each glycosylated (N-linked (GlcNAc...) asparagine). Positions 261 to 289 (VNDNPPRFPQSTYQFRAPESTPPDSPIGR) are disordered. N437, N455, and N536 each carry an N-linked (GlcNAc...) asparagine glycan. The chain crosses the membrane as a helical span at residues 616-636 (LIAILLCIIILLVTVVLFAAL). The Cytoplasmic portion of the chain corresponds to 637–790 (RRQRKKEPLI…YGSMDSDKDS (154 aa)).

It localises to the cell membrane. Its function is as follows. Cadherins are calcium-dependent cell adhesion proteins. They preferentially interact with themselves in a homophilic manner in connecting cells; cadherins may thus contribute to the sorting of heterogeneous cell types. This Gallus gallus (Chicken) protein is Cadherin-6 (CDH6).